Consider the following 394-residue polypeptide: Cytohesin-4 (394 aa).

Residues 12–65 are a coiled coil; that stretch reads SSGETEELQRIKWHRKQLLEDIQKLKDEIADVFAQIDCFESAEESRMAQKEKEL. One can recognise an SEC7 domain in the interval 54–241; the sequence is EESRMAQKEK…RNLFDSIKSE (188 aa). The 117-residue stretch at 259–375 folds into the PH domain; the sequence is NPDREGWLLK…WIESIRASIT (117 aa). A 1,2-diacyl-sn-glycero-3-phospho-(1D-myo-inositol-3,4,5-trisphosphate) is bound by residues 268-275, Arg279, Tyr290, and Arg300; that span reads KLGGRVKT. Residues 386–394 form a C-terminal autoinhibitory region region; the sequence is RKKKIASKQ.

As to expression, expressed predominantly in peripheral blood leukocytes.

Its subcellular location is the cell membrane. Promotes guanine-nucleotide exchange on ARF1 and ARF5. Promotes the activation of ARF factors through replacement of GDP with GTP. This chain is Cytohesin-4 (CYTH4), found in Homo sapiens (Human).